The sequence spans 557 residues: Tight junction-associated protein 1 (557 aa).

The interval 1 to 37 (MTSAAPAKKPYRKAPPEHRELRLEIPGSRLEQEEPLT) is disordered. An N-acetylthreonine modification is found at threonine 2. Basic and acidic residues predominate over residues 14 to 23 (APPEHRELRL). Positions 42–171 (MKLLQEENEE…EELNERYRLD (130 aa)) form a coiled coil. 2 disordered regions span residues 266–303 (MSEGVPGDPASPPAPGSPTPQPNGECHSLGTARGSPEE) and 309–328 (AFEKLNPYPTPSPPHPLYPG). Residues 274–286 (PASPPAPGSPTPQ) are compositionally biased toward pro residues. The residue at position 300 (serine 300) is a Phosphoserine. The segment covering 316 to 325 (YPTPSPPHPL) has biased composition (pro residues). A Phosphothreonine modification is found at threonine 318. Residues serine 320 and serine 345 each carry the phosphoserine modification. Residues 364–409 (EEGSERARPSPVPSTPASAQASPHHQPSPAPLTLSAPASSASSEED) form a disordered region. Over residues 378 to 388 (TPASAQASPHH) the composition is skewed to polar residues. A compositionally biased stretch (low complexity) spans 394–405 (PLTLSAPASSAS). Threonine 422 is modified (phosphothreonine). Basic and acidic residues predominate over residues 439 to 456 (LPELQRHFAHSPADRDEV). Residues 439–557 (LPELQRHFAH…QAQEQGNLLN (119 aa)) are disordered. Serine 491 bears the Phosphoserine mark. Positions 530–542 (RSPKRMGVHHLHR) are enriched in basic residues. Serine 545 carries the phosphoserine modification. Residues 546-557 (LTQAQEQGNLLN) are compositionally biased toward polar residues.

Interacts with DLG1. Interacts with ARF6 (GTP-bound form). As to expression, ubiquitously expressed.

The protein resides in the golgi apparatus. The protein localises to the trans-Golgi network. It localises to the cell junction. It is found in the tight junction. Its subcellular location is the cell membrane. In terms of biological role, plays a role in regulating the structure of the Golgi apparatus. This Homo sapiens (Human) protein is Tight junction-associated protein 1.